The sequence spans 505 residues: Aspartyl/glutamyl-tRNA(Asn/Gln) amidotransferase subunit B (505 aa).

It belongs to the GatB/GatE family. GatB subfamily. Heterotrimer of A, B and C subunits.

It carries out the reaction L-glutamyl-tRNA(Gln) + L-glutamine + ATP + H2O = L-glutaminyl-tRNA(Gln) + L-glutamate + ADP + phosphate + H(+). The catalysed reaction is L-aspartyl-tRNA(Asn) + L-glutamine + ATP + H2O = L-asparaginyl-tRNA(Asn) + L-glutamate + ADP + phosphate + 2 H(+). Allows the formation of correctly charged Asn-tRNA(Asn) or Gln-tRNA(Gln) through the transamidation of misacylated Asp-tRNA(Asn) or Glu-tRNA(Gln) in organisms which lack either or both of asparaginyl-tRNA or glutaminyl-tRNA synthetases. The reaction takes place in the presence of glutamine and ATP through an activated phospho-Asp-tRNA(Asn) or phospho-Glu-tRNA(Gln). The sequence is that of Aspartyl/glutamyl-tRNA(Asn/Gln) amidotransferase subunit B from Haloarcula marismortui (strain ATCC 43049 / DSM 3752 / JCM 8966 / VKM B-1809) (Halobacterium marismortui).